A 297-amino-acid chain; its full sequence is Occlusion-derived virus envelope protein E27 (297 aa).

It belongs to the baculoviridae E27 family. In terms of assembly, interacts with host mus209/PCNA, cdc2 and cdk6.

The protein resides in the virion membrane. Its function is as follows. Acts as a cyclin-like protein and plays a role in the modulation of host cell cycle. May promote G2/S arrest by interacting with host mus209/PCNA, cdc2 and cdk6. The cell cycle arrest is characterized by an intact nuclear envelope, concomitant with sustained activity of host cdc2. However, viral DNA replication still occurs in the arrested cells. The protein is Occlusion-derived virus envelope protein E27 of Orgyia pseudotsugata multicapsid polyhedrosis virus (OpMNPV).